Reading from the N-terminus, the 136-residue chain is Large ribosomal subunit protein uL13 (136 aa).

It belongs to the universal ribosomal protein uL13 family. As to quaternary structure, part of the 50S ribosomal subunit.

Functionally, this protein is one of the early assembly proteins of the 50S ribosomal subunit, although it is not seen to bind rRNA by itself. It is important during the early stages of 50S assembly. In Thermoplasma acidophilum (strain ATCC 25905 / DSM 1728 / JCM 9062 / NBRC 15155 / AMRC-C165), this protein is Large ribosomal subunit protein uL13.